Consider the following 282-residue polypeptide: HTH-type transcriptional activator RhaR (282 aa).

An HTH araC/xylS-type domain is found at Asp179–Leu277. DNA-binding regions (H-T-H motif) lie at residues Asp196 to Thr217 and Val244 to Thr267.

As to quaternary structure, binds DNA as a dimer.

It localises to the cytoplasm. In terms of biological role, activates expression of the rhaSR operon in response to L-rhamnose. This is HTH-type transcriptional activator RhaR from Salmonella choleraesuis (strain SC-B67).